Reading from the N-terminus, the 330-residue chain is Dof zinc finger protein DOF2.4 (330 aa).

Residues 14–25 (NWQQAPPSNYNH) are compositionally biased toward polar residues. Positions 14 to 70 (NWQQAPPSNYNHDGTGASANGGHVLRPQLQPQQQPQQQPHPNGSGGGGGGGGGSIRA) are disordered. Positions 40–55 (PQLQPQQQPQQQPHPN) are enriched in low complexity. The span at 56 to 68 (GSGGGGGGGGGSI) shows a compositional bias: gly residues. The segment at 89-143 (LKCPRCESTNTKFCYFNNYSLTQPRHFCKTCRRYWTRGGALRNVPVGGGCRRNRR) adopts a Dof-type zinc-finger fold. Zn(2+) contacts are provided by C91, C94, C116, and C119. 2 disordered regions span residues 133–165 (PVGG…SFSS) and 255–276 (QQSS…SANG). Positions 146-165 (SNSNNNNNSTATSNNTSFSS) are enriched in low complexity. Residues 265–276 (EDSSNPNPSANG) show a composition bias toward polar residues.

As to expression, specific to the vascular tissues. The PEAR proteins (e.g. DOF2.4, DOF5.1, DOF3.2, DOF1.1, DOF5.6 and DOF5.3) form a short-range concentration gradient that peaks at protophloem sieve elements (PSE).

The protein localises to the nucleus. Its subcellular location is the symplast. Functionally, transcription factor that binds specifically to a 5'-AA[AG]G-3' consensus core sequence. Probably involved in early processes for vascular development. The PEAR proteins (e.g. DOF2.4, DOF5.1, DOF3.2, DOF1.1, DOF5.6 and DOF5.3) activate gene expression that promotes radial growth of protophloem sieve elements. Triggers the transcription of HD-ZIP III genes, especially in the central domain of vascular tissue. This is Dof zinc finger protein DOF2.4 from Arabidopsis thaliana (Mouse-ear cress).